The chain runs to 345 residues: Succinylglutamate desuccinylase (345 aa).

Zn(2+)-binding residues include His-64, Glu-67, and His-161. Glu-225 is an active-site residue.

It belongs to the AspA/AstE family. Succinylglutamate desuccinylase subfamily. The cofactor is Zn(2+).

The catalysed reaction is N-succinyl-L-glutamate + H2O = L-glutamate + succinate. The protein operates within amino-acid degradation; L-arginine degradation via AST pathway; L-glutamate and succinate from L-arginine: step 5/5. In terms of biological role, transforms N(2)-succinylglutamate into succinate and glutamate. The chain is Succinylglutamate desuccinylase from Shewanella piezotolerans (strain WP3 / JCM 13877).